We begin with the raw amino-acid sequence, 591 residues long: Formate--tetrahydrofolate ligase (591 aa).

74 to 81 (TPLGEGKS) is an ATP binding site.

The protein belongs to the formate--tetrahydrofolate ligase family.

The catalysed reaction is (6S)-5,6,7,8-tetrahydrofolate + formate + ATP = (6R)-10-formyltetrahydrofolate + ADP + phosphate. The protein operates within one-carbon metabolism; tetrahydrofolate interconversion. In Lawsonia intracellularis (strain PHE/MN1-00), this protein is Formate--tetrahydrofolate ligase.